The chain runs to 173 residues: Bifunctional protein PyrR (173 aa).

A PRPP-binding motif is present at residues 93–105 (VILIDDVLYTGRT).

This sequence belongs to the purine/pyrimidine phosphoribosyltransferase family. PyrR subfamily. Homodimer and homohexamer; in equilibrium.

The enzyme catalyses UMP + diphosphate = 5-phospho-alpha-D-ribose 1-diphosphate + uracil. Regulates transcriptional attenuation of the pyrimidine nucleotide (pyr) operon by binding in a uridine-dependent manner to specific sites on pyr mRNA. This disrupts an antiterminator hairpin in the RNA and favors formation of a downstream transcription terminator, leading to a reduced expression of downstream genes. Functionally, also displays a weak uracil phosphoribosyltransferase activity which is not physiologically significant. This is Bifunctional protein PyrR from Streptococcus pyogenes serotype M12 (strain MGAS2096).